The following is a 297-amino-acid chain: Probable porphobilinogen deaminase (297 aa).

At Cys241 the chain carries S-(dipyrrolylmethanemethyl)cysteine.

This sequence belongs to the HMBS family. It depends on dipyrromethane as a cofactor.

The catalysed reaction is 4 porphobilinogen + H2O = hydroxymethylbilane + 4 NH4(+). The protein operates within porphyrin-containing compound metabolism; protoporphyrin-IX biosynthesis; coproporphyrinogen-III from 5-aminolevulinate: step 2/4. In terms of biological role, tetrapolymerization of the monopyrrole PBG into the hydroxymethylbilane pre-uroporphyrinogen in several discrete steps. This chain is Probable porphobilinogen deaminase, found in Pyrobaculum arsenaticum (strain DSM 13514 / JCM 11321 / PZ6).